The primary structure comprises 277 residues: Radial spoke head protein 9 homolog (277 aa).

The protein belongs to the flagellar radial spoke RSP9 family. In terms of assembly, component of axonemal radial spoke complexes.

It localises to the cytoplasm. It is found in the cytoskeleton. Its subcellular location is the cilium axoneme. The protein resides in the flagellum axoneme. The protein localises to the cell projection. It localises to the kinocilium. In terms of biological role, functions as part of axonemal radial spoke complexes that play an important part in the motility of sperm and cilia. Required for motility of olfactory and neural cilia and for the structural integrity of ciliary axonemes in both 9+0 and 9+2 motile cilia. Essential for both the radial spoke head assembly and the central pair microtubule stability in ependymal motile cilia. In Danio rerio (Zebrafish), this protein is Radial spoke head protein 9 homolog (rsph9).